Here is a 379-residue protein sequence, read N- to C-terminus: Stimulator of interferon genes protein (379 aa).

The Cytoplasmic portion of the chain corresponds to 1–17; that stretch reads MPHSSLHPSIPCPRGHG. Positions 1–190 are mediates interaction with ZDHHC1 and ZDHHC11; the sequence is MPHSSLHPSI…TYNQHYNNLL (190 aa). Residues 18 to 34 form a helical membrane-spanning segment; sequence AQKAALVLLSACLVTLW. Lys20 is covalently cross-linked (Glycyl lysine isopeptide (Lys-Gly) (interchain with G-Cter in ubiquitin)). Over 35-44 the chain is Lumenal; sequence GLGEPPEHTL. Residues 45-69 traverse the membrane as a helical segment; sequence RYLVLHLASLQLGLLLNGVCSLAEE. Topologically, residues 70-91 are cytoplasmic; it reads LRHIHSRYRGSYWRTVRACLGC. Residues Cys88 and Cys91 are each lipidated (S-palmitoyl cysteine). Residues 92–106 form a helical membrane-spanning segment; the sequence is PLRRGALLLLSIYFY. Residues 107–116 are Lumenal-facing; the sequence is YSLPNAVGPP. A helical membrane pass occupies residues 117–134; sequence FTWMLALLGLSQALNILL. The Cytoplasmic segment spans residues 135–379; it reads GLKGLAPAEI…KPLPLRTDFS (245 aa). Residue Lys150 forms a Glycyl lysine isopeptide (Lys-Gly) (interchain with G-Cter in ubiquitin) linkage. The cyclic dinucleotide-binding domain (CBD) stretch occupies residues 153-340; sequence FNVAHGLAWS…RHLRQEEKEE (188 aa). 2 residues coordinate 2',3'-cGAMP: Ser162 and Tyr167. Ser162 and Tyr167 together coordinate 3',3'-c-di-GMP. Residue Tyr167 coordinates 2',3'-cUAMP. A Phosphothreonine modification is found at Thr229. Residue Lys236 forms a Glycyl lysine isopeptide (Lys-Gly) (interchain with G-Cter in ubiquitin) linkage. Residue Arg238 participates in 2',3'-cGAMP binding. Arg238 contributes to the 2',3'-cUAMP binding site. 3',3'-c-di-GMP-binding positions include 238-241 and Thr263; that span reads RVYS. Ser241 is subject to Phosphoserine. Thr263 is a 2',3'-cGAMP binding site. Thr263 is a 2',3'-cUAMP binding site. A Glycyl lysine isopeptide (Lys-Gly) (interchain with G-Cter in SUMO) cross-link involves residue Lys338. The tract at residues 340–379 is C-terminal tail (CTT); sequence EVTVGSLKTSAVPSTSTMSQEPELLISGMEKPLPLRTDFS. Residues 341-370 are disordered; that stretch reads VTVGSLKTSAVPSTSTMSQEPELLISGMEK. Polar residues predominate over residues 345–359; it reads SLKTSAVPSTSTMSQ. Thr354 carries the phosphothreonine modification. Ser355 carries the post-translational modification Phosphoserine; by MAP3K7. A Phosphothreonine modification is found at Thr356. 2 positions are modified to phosphoserine; by TBK1: Ser358 and Ser366. Residues 363–366 carry the pLxIS motif motif; it reads LLIS.

Belongs to the STING family. In terms of assembly, homodimer; forms a homodimer in absence of cyclic nucleotide (c-di-GMP or cGAMP); 'Lys-63'-linked ubiquitination at Lys-150 is required for homodimerization. Homotetramer; in presence of cyclic nucleotide (c-di-GMP or cGAMP), forms tetramers and higher-order oligomers through side-by-side packing. Interacts (when phosphorylated) with IRF3; following activation and phosphorylation on the pLxIS motif by TBK1, recruits IRF3. Interacts with RIGI, MAVS and SSR2. Interacts with RNF5 and TRIM56. Interacts with TBK1; when homodimer, leading to subsequent production of IFN-beta. Interacts with IFIT1 and IFIT2. Interacts with TRIM29; this interaction induces STING1 ubiquitination and subsequent degradation. Associates with the MHC-II complex. Interacts with STEEP1; interaction takes place upon cGAMP-activation and STING1 phosphorylation by MAP3K7/TAK1 and promotes STING1 translocation to COPII vesicles. Interacts with SEC24A, SEC24B, and SEC24C; promoting translocation to COPII vesicles. Interacts (when ubiquitinated) with SQSTM1; leading to relocalization to autophagosomes. Interacts with SURF4. Interacts with HNRNPA2B1. Interacts with ZDHHC1; ZDHHC1 constitutively interacts with STING1 and in presence of DNA viruses activates it by promoting its cGAMP-induced oligomerization and the recruitment of downstream signaling components. Interacts with ZDHHC11; in presence of DNA viruses promotes the recruitment of IRF3 to STING1. Interacts with TOMM70. Interacts with isoform IFI16-beta of IFI16. Interacts with TAB1; promoting recruitment of TAB1 to the endoplasmic reticulum membrane and subsequent activation of MAP3K7/TAK1. Interacts (via transmembrane domain) with TMEM203. Interacts with DDX41. Interacts with TMEM120A (via C-terminal domain); regulates the trafficking of STING1 from the ER to the ER-Golgi intermediate compartment to elicit antiviral effects. As to quaternary structure, (Microbial infection) Interacts with human papillomavirus (HPV) protein E7. (Microbial infection) Interacts with adenovirus early E1A protein. In terms of assembly, (Microbial infection) Interacts with herpes simplex virus 1 protein ICP34.5; this interaction inhibits the intracellular DNA sensing pathway. As to quaternary structure, (Microbial infection) Interacts with Chikungunya virus non-structural protein 1; this interaction results in inhibition of cGAS-STING signaling and increased levels of palmitoylated nsP1 and protein stabilization. (Microbial infection) Interacts with human cytomegalovirus proteins UL94, UL42 and UL138; these interactions result in the inhibition of cGAS-STING signaling. In terms of assembly, (Microbial infection) Interacts with varivella virus protein 39; this interaction results in the inhibition of cGAS-STING signaling. Post-translationally, phosphorylation by TBK1 leads to activation and production of IFN-beta. Following cyclic nucleotide (c-di-GMP or cGAMP)-binding, activation and translocation from the endoplasmic reticulum, STING1 is phosphorylated by TBK1 at Ser-366 in the pLxIS motif. The phosphorylated pLxIS motif constitutes an IRF3-binding motif, leading to recruitment of the transcription factor IRF3 to induce type-I interferons and other cytokines. The phosphorylated pLxIS motif facilitates SENP2 recruitment during late phase of viral infection. Phosphorylated on tyrosine residues upon MHC-II aggregation. Dephosphorylation by PPP6C leads to inactivation and decreased production of IFN-beta. Phosphorylation at Ser-358 is also required to activate IRF3. Phosphorylation at Ser-355 by MAP3K7/TAK1 facilitates its interaction with STEEP1, promoting STING1 translocation to COPII vesicles. Ubiquitinated. Ubiquitinated via 'Lys-63'-linked ubiquitin chains in response to double-stranded DNA treatment, leading to relocalization to autophagosomes and subsequent degradation; this process is dependent on SQSTM1. 'Lys-63'-linked ubiquitination mediated by TRIM56 at Lys-150 promotes homodimerization and recruitment of the antiviral kinase TBK1 and subsequent production of IFN-beta. 'Lys-48'-linked polyubiquitination at Lys-150 occurring after viral infection is mediated by RNF5 and leads to proteasomal degradation. 'Lys-11'-linked polyubiquitination at Lys-150 by RNF26 leads to stabilize STING1: it protects STING1 from RNF5-mediated 'Lys-48'-linked polyubiquitination. 'Lys-33'-linked and 'Lys-48'-linked deubiquitinated by USP20; leading to its stabilization and promotion of innate antiviral response. 'Lys-48'-linked deubiquitinated by USP44; leading to its stabilization and promotion of innate antiviral response. Deubiquitinated by USP13; leading to inhibition of innate antiviral response. 'Lys-63'-linked deubiquitinated by USP49; leading to inhibition of the subsequent recruitment of TBK1 to the signaling complex. 'Lys-63'-linked ubiquitination mediated by RNF39 promotes the activation of the cGAS-STING pathway. MARCHF5-mediated ubiquitination prevents the oxidation-induced polymer formation. In terms of processing, (Microbial infection) Deubiquitinated by Epstein-Barr virus BPLF1 on both 'Lys-48' and 'Lys-63'-linked ubiquitin chains; leading to inhibition of cGAS-STING signaling. Post-translationally, sumoylated at Lys-338 by TRIM38 during the early phase of viral infection, promoting its stability by preventing its relocalization to autophagosomes and subsequent degradation. Desumoylated by SENP2 during the late phase of viral infection. Palmitoylation takes place in the Golgi apparatus and creates a platform for the recruitment of TBK1. Ubiquitously expressed. Expressed in skin endothelial cells, alveolar type 2 pneumocytes, bronchial epithelium and alveolar macrophages.

The protein localises to the endoplasmic reticulum membrane. Its subcellular location is the cytoplasm. The protein resides in the perinuclear region. It is found in the endoplasmic reticulum-Golgi intermediate compartment membrane. It localises to the golgi apparatus membrane. The protein localises to the cytoplasmic vesicle. Its subcellular location is the autophagosome membrane. The protein resides in the mitochondrion outer membrane. It is found in the cell membrane. The enzyme catalyses H(+)(in) = H(+)(out). Its activity is regulated as follows. Activated upon binding to the hydrolysis-resistant 2'3'-cG(s)A(s)MP, an analog of cGAMP, in which phosphodiester linkages are replaced by phosphothioate linkages. Specifically inhibited by small-molecule H-151 (N-(4-ethylphenyl)-N'-1H-indol-3-yl-urea), which covalently binds Cys-91 and prevents palmitoylation and subsequent activation of STING1. In contrast to mouse protein, not activated by anticancer molecule 5,6-dimethylxanthenone 4-acetic acid (DMXAA). Inhibited by compound 18 ([(3S,4S)-2-(4-tert-butyl-3-chlorophenyl)-3-(2,3-dihydro-1,4-benzodioxin-6-yl)-7-fluoro-1-oxo-1,2,3,4-tetrahydroisoquinolin-4-yl]acetate), a competitive inhibitor with slow dissociation kinetics and good oral bioavailability. Homooligomerization and ability to promote the production of type I interferons is activated by C53, a small benzothiazinone-like compound that binds to the transmembrane regions. in the area of the putative pore. In contrast, compound C53, directly inhibits the proton channel activity and facilitate MAP1LC3B/LC3B lipidation and autophagosome formation. Facilitator of innate immune signaling that acts as a sensor of cytosolic DNA from bacteria and viruses and promotes the production of type I interferon (IFN-alpha and IFN-beta). Innate immune response is triggered in response to non-CpG double-stranded DNA from viruses and bacteria delivered to the cytoplasm. Acts by binding cyclic dinucleotides: recognizes and binds cyclic di-GMP (c-di-GMP), a second messenger produced by bacteria, cyclic UMP-AMP (2',3'-cUAMP), and cyclic GMP-AMP (cGAMP), a messenger produced by CGAS in response to DNA virus in the cytosol. Upon binding to c-di-GMP, cUAMP or cGAMP, STING1 oligomerizes, translocates from the endoplasmic reticulum and is phosphorylated by TBK1 on the pLxIS motif, leading to recruitment and subsequent activation of the transcription factor IRF3 to induce expression of type I interferon and exert a potent anti-viral state. Exhibits 2',3' phosphodiester linkage-specific ligand recognition: can bind both 2'-3' linked cGAMP (2'-3'-cGAMP) and 3'-3' linked cGAMP but is preferentially activated by 2'-3' linked cGAMP. The preference for 2'-3'-cGAMP, compared to other linkage isomers is probably due to the ligand itself, whichs adopts an organized free-ligand conformation that resembles the STING1-bound conformation and pays low energy costs in changing into the active conformation. In addition to promote the production of type I interferons, plays a direct role in autophagy. Following cGAMP-binding, STING1 buds from the endoplasmic reticulum into COPII vesicles, which then form the endoplasmic reticulum-Golgi intermediate compartment (ERGIC). The ERGIC serves as the membrane source for WIPI2 recruitment and LC3 lipidation, leading to formation of autophagosomes that target cytosolic DNA or DNA viruses for degradation by the lysosome. Promotes autophagy by acting as a proton channel that directs proton efflux from the Golgi to facilitate MAP1LC3B/LC3B lipidation. The autophagy- and interferon-inducing activities can be uncoupled and autophagy induction is independent of TBK1 phosphorylation. Autophagy is also triggered upon infection by bacteria: following c-di-GMP-binding, which is produced by live Gram-positive bacteria, promotes reticulophagy. May be involved in translocon function, the translocon possibly being able to influence the induction of type I interferons. May be involved in transduction of apoptotic signals via its association with the major histocompatibility complex class II (MHC-II). Functionally, (Microbial infection) Antiviral activity is antagonized by oncoproteins, such as papillomavirus (HPV) protein E7 and adenovirus early E1A protein. Such oncoproteins prevent the ability to sense cytosolic DNA. The chain is Stimulator of interferon genes protein from Homo sapiens (Human).